The sequence spans 3133 residues: Hemocytin (3133 aa).

The 57-residue stretch at 40-96 folds into the TIL 1 domain; sequence CTGGQQYTVCADSCLRKCSDTALAASGQCKPVCVEGCACSPSQLLDDNGVCVPVAKC. The N-linked (GlcNAc...) asparagine glycan is linked to Asn-151. Residues 153–209 form the TIL 2 domain; the sequence is TAQNMEFTTCETSEPLTCKNMHLPPSTQTAECRPGCQCKKGQVLDTASKRCVPATQC. N-linked (GlcNAc...) asparagine glycosylation occurs at Asn-237. The VWFD 1 domain maps to 247–418; the sequence is GVCGAWGDSH…DSWKLKPTCP (172 aa). Intrachain disulfides connect Cys-249/Cys-380, Cys-271/Cys-417, and Cys-295/Cys-302. The TIL 3 domain maps to 509-576; it reads CDEVCSNYDS…TTECVPRAKC (68 aa). A glycan (N-linked (GlcNAc...) asparagine) is linked at Asn-564. Residues 661–680 are disordered; that stretch reads PDGQSVESEPLPKPNELQIG. The 68-residue stretch at 770-837 folds into the TIL 4 domain; that stretch reads CPPGEVYQAC…ERTCVPVKDC (68 aa). The segment at 899-924 is disordered; it reads STTTTTTTSTTTTTTTPEPTETTTET. 2 disulfide bridges follow: Cys-940/Cys-1095 and Cys-1116/Cys-1254. F5/8 type C domains are found at residues 940–1095 and 1116–1254; these read CSPD…IIGC and CTEP…PIGC. N-linked (GlcNAc...) asparagine glycans are attached at residues Asn-1170, Asn-1387, Asn-1622, Asn-1727, and Asn-1847. In terms of domain architecture, VWFD 2 spans 1619–1794; it reads VFCNMTGRTF…KPGVPADACA (176 aa). 2 disulfides stabilise this stretch: Cys-1621–Cys-1754 and Cys-1641–Cys-1793. The TIL 5 domain occupies 1890 to 1948; that stretch reads CPPPLVHYDCYRKRCEETCAPYPNAARACPAQEGQCSPGCYCPDGKLRKGDQCVLPADC. The 186-residue stretch at 1951–2136 folds into the VWFD 3 domain; sequence CTCTGVGTPA…WQASPEKLTE (186 aa). 2 disulfides stabilise this stretch: Cys-1953–Cys-2099 and Cys-2001–Cys-2009. 2 N-linked (GlcNAc...) asparagine glycosylation sites follow: Asn-1975 and Asn-1985. N-linked (GlcNAc...) asparagine glycans are attached at residues Asn-2093, Asn-2113, Asn-2161, Asn-2276, and Asn-2451. The TIL 6 domain occupies 2229 to 2285; it reads CEEPFVYRACVDCERTCDNYEQLQTSPEKCTNKPVEGCFCPEGKVRVNNTCIEPGKC. Residues 2553 to 2622 form the VWFC 1 domain; the sequence is VACRHQDNVY…DSGQCCGKCE (70 aa). N-linked (GlcNAc...) asparagine glycans are attached at residues Asn-2647, Asn-2654, Asn-2663, Asn-2794, Asn-2810, Asn-2865, Asn-2929, Asn-2964, and Asn-3028. One can recognise a VWFC 2 domain in the interval 2842-2907; the sequence is VACRDGDKIY…AADHCCGRCV (66 aa). Cystine bridges form between Cys-2971/Cys-3040, Cys-2991/Cys-3054, Cys-3004/Cys-3070, and Cys-3020/Cys-3072. The region spanning 2971-3076 is the CTCK domain; sequence CNEKPQALSK…PARCHCAACG (106 aa).

In terms of processing, may be converted into the 260 kDa mature hemocytin by proteolysis.

Functionally, adhesive protein and relates to hemostasis or encapsulation of foreign substances for self-defense. In Bombyx mori (Silk moth), this protein is Hemocytin.